Here is a 606-residue protein sequence, read N- to C-terminus: Transmembrane 9 superfamily member 1 (606 aa).

A signal peptide spans 1–27; sequence MTVLGHPRSWSCRWWPLLLLLLLTGRE. Asparagine 178 is a glycosylation site (N-linked (GlcNAc...) asparagine). Helical transmembrane passes span 237–257, 310–330, 339–359, and 373–393; these read LSIINSMVLVFLLVGFVAVIL, VLGVGAQFLALGTGIIVMALL, GAINSAAILLYALTCCISGYV, and VWNIILTTSLFSVPFFLTWSV. N-linked (GlcNAc...) asparagine glycosylation occurs at asparagine 401. 4 consecutive transmembrane segments (helical) span residues 412–432, 469–489, 499–519, and 535–555; these read ILLLLTVWLLVGFPLTVIGGI, VGGFLPFSAISVELYYIFATV, GILFFVFAILLSVGACISIAL, and SVLSVGSTGLFIFLYSVFYYA. Residue asparagine 559 is glycosylated (N-linked (GlcNAc...) asparagine). Residues 570–590 form a helical membrane-spanning segment; sequence FGYSLLTGYVFFLMLGTISFF.

The protein belongs to the nonaspanin (TM9SF) (TC 9.A.2) family.

Its subcellular location is the lysosome membrane. It is found in the cytoplasmic vesicle. It localises to the autophagosome membrane. In terms of biological role, plays an essential role in autophagy. This Bos taurus (Bovine) protein is Transmembrane 9 superfamily member 1 (TM9SF1).